The primary structure comprises 1503 residues: Lysophospholipase NTE1 (1503 aa).

At 1 to 25 the chain is on the cytoplasmic side; the sequence is MDSSTAALATASAKLDAVAQQGSSS. The chain crosses the membrane as a helical span at residues 26-46; the sequence is WIGFFANIILGIISLVYSILY. Residues 47–71 are Lumenal-facing; that stretch reads SVLKLTTFSIPSLLYTLFSTSLTVT. Residues 72–92 form a helical membrane-spanning segment; the sequence is MNATTLMLIIVLVFSLVSWFV. Topologically, residues 93–1503 are cytoplasmic; the sequence is RYRYLNMYSR…RTMAPRRASI (1411 aa). 3 disordered regions span residues 252–348, 454–561, and 722–745; these read RHGG…TTSV, TKGI…SNPF, and KNES…RFMD. Polar residues-rich tracts occupy residues 262 to 272, 285 to 302, 487 to 496, 506 to 542, 552 to 561, and 723 to 737; these read TSATETYTSSR, STVS…SSHG, QRPSSVTASP, KHTS…STLL, PLSQRTSNPF, and NESS…QQGS. Residues 658–777 and 821–941 each bind a nucleoside 3',5'-cyclic phosphate; these read GLPV…GYVG and RLTN…IASR. Residues 1200 to 1364 enclose the PNPLA domain; it reads LVLGGGGARG…IDNLTVSHMK (165 aa). Residues 1204-1209 carry the GXGXXG motif; the sequence is GGGARG. Positions 1231–1235 match the GXSXG motif; that stretch reads GTSIG. Ser1233 (nucleophile) is an active-site residue. The active-site Proton acceptor is the Asp1351. Positions 1351-1353 match the DGA/G motif; it reads DGG.

This sequence belongs to the NTE family.

It is found in the endoplasmic reticulum membrane. The catalysed reaction is a 1-acyl-sn-glycero-3-phosphocholine + H2O = sn-glycerol 3-phosphocholine + a fatty acid + H(+). Inhibited by organophosphorus esters. Its function is as follows. Intracellular phospholipase B that catalyzes the double deacylation of phosphatidylcholine (PC) to glycerophosphocholine (GroPCho). Plays an important role in membrane lipid homeostasis. Responsible for the rapid PC turnover in response to inositol, elevated temperatures, or when choline is present in the growth medium. The sequence is that of Lysophospholipase NTE1 (NTE1) from Pyricularia oryzae (strain 70-15 / ATCC MYA-4617 / FGSC 8958) (Rice blast fungus).